A 342-amino-acid polypeptide reads, in one-letter code: DNA primase small subunit PriS (342 aa).

Residues Asp97, Asp99, and Asp276 contribute to the active site.

It belongs to the eukaryotic-type primase small subunit family. Heterodimer of a small subunit (PriS) and a large subunit (PriL). Mg(2+) serves as cofactor. Requires Mn(2+) as cofactor.

Catalytic subunit of DNA primase, an RNA polymerase that catalyzes the synthesis of short RNA molecules used as primers for DNA polymerase during DNA replication. The small subunit contains the primase catalytic core and has DNA synthesis activity on its own. Binding to the large subunit stabilizes and modulates the activity, increasing the rate of DNA synthesis while decreasing the length of the DNA fragments, and conferring RNA synthesis capability. The DNA polymerase activity may enable DNA primase to also catalyze primer extension after primer synthesis. May also play a role in DNA repair. The sequence is that of DNA primase small subunit PriS from Thermococcus sibiricus (strain DSM 12597 / MM 739).